A 425-amino-acid polypeptide reads, in one-letter code: Enolase (425 aa).

Glutamine 162 is a binding site for (2R)-2-phosphoglycerate. The active-site Proton donor is glutamate 204. The Mg(2+) site is built by aspartate 241, glutamate 282, and aspartate 309. (2R)-2-phosphoglycerate contacts are provided by lysine 334, arginine 363, serine 364, and lysine 385. The Proton acceptor role is filled by lysine 334.

This sequence belongs to the enolase family. Mg(2+) serves as cofactor.

It localises to the cytoplasm. It is found in the secreted. The protein resides in the cell surface. It carries out the reaction (2R)-2-phosphoglycerate = phosphoenolpyruvate + H2O. The protein operates within carbohydrate degradation; glycolysis; pyruvate from D-glyceraldehyde 3-phosphate: step 4/5. In terms of biological role, catalyzes the reversible conversion of 2-phosphoglycerate (2-PG) into phosphoenolpyruvate (PEP). It is essential for the degradation of carbohydrates via glycolysis. The chain is Enolase from Corynebacterium jeikeium (strain K411).